The chain runs to 574 residues: Proline--tRNA ligase (574 aa).

Belongs to the class-II aminoacyl-tRNA synthetase family. ProS type 1 subfamily. In terms of assembly, homodimer.

The protein localises to the cytoplasm. It carries out the reaction tRNA(Pro) + L-proline + ATP = L-prolyl-tRNA(Pro) + AMP + diphosphate. In terms of biological role, catalyzes the attachment of proline to tRNA(Pro) in a two-step reaction: proline is first activated by ATP to form Pro-AMP and then transferred to the acceptor end of tRNA(Pro). As ProRS can inadvertently accommodate and process non-cognate amino acids such as alanine and cysteine, to avoid such errors it has two additional distinct editing activities against alanine. One activity is designated as 'pretransfer' editing and involves the tRNA(Pro)-independent hydrolysis of activated Ala-AMP. The other activity is designated 'posttransfer' editing and involves deacylation of mischarged Ala-tRNA(Pro). The misacylated Cys-tRNA(Pro) is not edited by ProRS. The sequence is that of Proline--tRNA ligase from Anaeromyxobacter sp. (strain K).